The chain runs to 482 residues: E1B 55 kDa protein (482 aa).

The interval 73-94 (VLDSGEGPSCADDRDKQEKKES) is disordered. The segment covering 83 to 94 (ADDRDKQEKKES) has biased composition (basic and acidic residues). Phosphoserine is present on residues Ser-476 and Ser-477.

The protein belongs to the adenoviridae E1B 55 kDa protein family. Interacts with host PML-4 and PML-5; this interaction promotes efficient subnuclear targeting of E1B-55K to PML nuclear bodies. Interacts with E4-ORF3 protein. Interacts with E4-ORF6 protein.

It localises to the host nucleus. The protein localises to the host cytoplasm. Plays a major role to prevent cellular inhibition of viral genome replication. Assembles an SCF-like E3 ubiquitin ligase complex based on the cellular proteins ELOB, ELOC, CUL5 and RBX1, in cooperation with viral E4orf6. This viral RING-type ligase ubiquitinates cellular substrates and targets them to proteasomal degradation: TP53/p53, LIG4, MRE11-RAD50-NBS1 (MRN) complex, ITGA3, DAXX and BLM. E1B-55K probably acts as the substrate-specific adapter of the SCF-like E3 ubiquitin ligase complex. Degradation of host TP53/p53 activity is essential for preventing E1A-induced TP53 accumulation that would otherwise lead to cell apoptosis and growth arrest. E1B-55K also inactivates TP53 transcription-factor activity by binding its transactivation domain. E1B-55K also functions as a SUMO1 E3 ligase for TP53 which causes the latter to be sequestered in promyelocytic leukemia (PML) nuclear bodies thereby contributing to maximal inhibition of TP53 function. This chain is E1B 55 kDa protein, found in Homo sapiens (Human).